An 89-amino-acid chain; its full sequence is Small ribosomal subunit protein uS19 (89 aa).

Belongs to the universal ribosomal protein uS19 family.

Protein S19 forms a complex with S13 that binds strongly to the 16S ribosomal RNA. In Stenotrophomonas maltophilia (strain K279a), this protein is Small ribosomal subunit protein uS19.